Here is a 473-residue protein sequence, read N- to C-terminus: H(+)/Cl(-) exchange transporter ClcA (473 aa).

Topologically, residues 1 to 32 are cytoplasmic; sequence MNTDTPTFEAQQVVRLRRGDLIRRLLQRDKTP. A helical transmembrane segment spans residues 33–69; sequence LAILLTAAVVGTVTGLIGVAFEKAVTWVQNLRIGALV. Topologically, residues 70-76 are periplasmic; the sequence is QTADYAI. A helical membrane pass occupies residues 77–100; it reads LVWPLAFILSALLAMVGYFLVRKF. Residues 101–108 are Cytoplasmic-facing; that stretch reads APEAGGSG. The short motif at 106 to 110 is the Selectivity filter part_1 element; sequence GSGIP. S107 contributes to the chloride binding site. Residues 109 to 116 constitute an intramembrane region (helical); that stretch reads IPEIEGAL. Over 117-123 the chain is Cytoplasmic; the sequence is EELRPVR. The chain crosses the membrane as a helical span at residues 124-141; the sequence is WWRVLPVKFVGGMGTLGA. The Periplasmic portion of the chain corresponds to 142–147; the sequence is GMVLGR. Residues 146–150 carry the Selectivity filter part_2 motif; the sequence is GREGP. A helical transmembrane segment spans residues 148–166; it reads EGPTVQIGGNIGRMVLDLF. Topologically, residues 167 to 176 are cytoplasmic; the sequence is RMRSAEARHT. 2 consecutive intramembrane regions (helical) follow at residues 177 to 189 and 193 to 201; these read LLATGAAAGLSAA and PLAGILFII. Residues 202-214 are Cytoplasmic-facing; sequence EEMRPQFRYNLIS. Residues 215–232 form a helical membrane-spanning segment; the sequence is IKAVFTGVIMSSIVFRIF. Topologically, residues 233–252 are periplasmic; the sequence is NGEAPIIEVGKLSNAPVNTL. The chain crosses the membrane as a helical span at residues 253–281; sequence WLYLILGMIFGCVGPLFNHLVLRTQDMFQ. Residues 282 to 287 are Cytoplasmic-facing; that stretch reads RFHGGE. Residues 288–309 traverse the membrane as a helical segment; it reads IKKWVLMGGAIGGLCGILGLIE. Over 310–329 the chain is Periplasmic; the sequence is PEAAGGGFNLIPIAAAGNYS. Residues 330 to 349 traverse the membrane as a helical segment; it reads VGLLLFIFIARVLTTLLCFS. Residues 350–354 lie on the Cytoplasmic side of the membrane; sequence SGAPG. A Selectivity filter part_3 motif is present at residues 355–359; the sequence is GIFAP. The chain crosses the membrane as a helical span at residues 355-376; it reads GIFAPMLALGTLLGTAFGMAAA. Chloride contacts are provided by I356 and F357. Topologically, residues 377-386 are periplasmic; that stretch reads ACFPQYHLEA. Residues 387–401 constitute an intramembrane region (helical); the sequence is GTFAIAGMGALLAAS. Residues 402–404 constitute an intramembrane region (note=Loop between two helices); that stretch reads VRA. Positions 405–416 form an intramembrane region, helical; the sequence is PLTGIVLVLEMT. The segment at residues 417 to 421 is an intramembrane region (note=Loop between two helices); that stretch reads DNYQL. The helical transmembrane segment at 422–438 threads the bilayer; that stretch reads ILPMIITCLGATLLAQF. At 439–473 the chain is on the cytoplasmic side; it reads MGGKPLYSTILARTLAKQDAEQAAKSQRSVAGENT. Y445 is a binding site for chloride.

This sequence belongs to the chloride channel (TC 2.A.49) family. ClcA subfamily. In terms of assembly, homodimer.

It localises to the cell inner membrane. The catalysed reaction is 2 chloride(in) + H(+)(out) = 2 chloride(out) + H(+)(in). Functionally, proton-coupled chloride transporter. Functions as antiport system and exchanges two chloride ions for 1 proton. Probably acts as an electrical shunt for an outwardly-directed proton pump that is linked to amino acid decarboxylation, as part of the extreme acid resistance (XAR) response. In Citrobacter koseri (strain ATCC BAA-895 / CDC 4225-83 / SGSC4696), this protein is H(+)/Cl(-) exchange transporter ClcA.